The primary structure comprises 137 residues: Small ribosomal subunit protein uS12 (137 aa).

The span at 31–41 shows a compositional bias: polar residues; that stretch reads MSRKQTNNTAP. The segment at 31-57 is disordered; sequence MSRKQTNNTAPQKRGVATRVGTMTPKK. D102 carries the post-translational modification 3-methylthioaspartic acid.

Belongs to the universal ribosomal protein uS12 family. As to quaternary structure, part of the 30S ribosomal subunit. Contacts proteins S8 and S17. May interact with IF1 in the 30S initiation complex.

In terms of biological role, with S4 and S5 plays an important role in translational accuracy. Its function is as follows. Interacts with and stabilizes bases of the 16S rRNA that are involved in tRNA selection in the A site and with the mRNA backbone. Located at the interface of the 30S and 50S subunits, it traverses the body of the 30S subunit contacting proteins on the other side and probably holding the rRNA structure together. The combined cluster of proteins S8, S12 and S17 appears to hold together the shoulder and platform of the 30S subunit. The sequence is that of Small ribosomal subunit protein uS12 from Oenococcus oeni (strain ATCC BAA-331 / PSU-1).